A 320-amino-acid polypeptide reads, in one-letter code: Transmembrane protein 41 homolog (320 aa).

Positions 20-72 (GRAKALQEHSPDQVATPLLPQVPPQEQQDLNPQQQQQQQQQQQATPQKQAMSA) are disordered. Residues 43-68 (PQEQQDLNPQQQQQQQQQQQATPQKQ) are compositionally biased toward low complexity. 6 helical membrane-spanning segments follow: residues 83–103 (VIVA…YAIF), 141–161 (VMFG…PGSL), 173–195 (FPIA…YTLS), 225–242 (LFNY…PNWF), 245–265 (LASP…FCGV), and 289–309 (FSWT…LPGL).

Belongs to the TMEM41 family. As to expression, in embryos, strongly expressed in the nervous system.

It localises to the membrane. Required in cholinergic neurons, but not in motor neurons, for normal neurotransmitter release by motor neurons. Involved in muscle growth. This Drosophila melanogaster (Fruit fly) protein is Transmembrane protein 41 homolog (stas).